We begin with the raw amino-acid sequence, 299 residues long: Protoheme IX farnesyltransferase (299 aa).

A run of 9 helical transmembrane segments spans residues V25–V45, W47–V67, A95–F115, L119–L139, I147–G167, P173–I193, V218–H238, L243–Y263, and I279–I299.

This sequence belongs to the UbiA prenyltransferase family. Protoheme IX farnesyltransferase subfamily.

The protein resides in the cell inner membrane. The enzyme catalyses heme b + (2E,6E)-farnesyl diphosphate + H2O = Fe(II)-heme o + diphosphate. The protein operates within porphyrin-containing compound metabolism; heme O biosynthesis; heme O from protoheme: step 1/1. Functionally, converts heme B (protoheme IX) to heme O by substitution of the vinyl group on carbon 2 of heme B porphyrin ring with a hydroxyethyl farnesyl side group. The sequence is that of Protoheme IX farnesyltransferase from Ectopseudomonas mendocina (strain ymp) (Pseudomonas mendocina).